The following is an 82-amino-acid chain: U6 snRNA-associated Sm-like protein LSm6 (82 aa).

One can recognise a Sm domain in the interval 13–82; sequence DPSGFLSEII…GNNVMYISAD (70 aa).

Belongs to the snRNP Sm proteins family. SmF/LSm6 subfamily. As to quaternary structure, component of the heptameric LSM1-LSM7 complex, which consists of snr-1/lsm1, snr-2/lsm2, snr-3/lsm3, snr-4/lsm4, snr-5/lsm5, snr-6/lsm6 and snr-7/lsm7. Component of the heptameric LSM2-LSM8 complex, which consists of snr-2/lsm2, snr-3/lsm3, snr-4/lsm4, snr-5/lsm5, snr-6/lsm6, snr-7/lsm7 and snr-8/lsm8. The LSm subunits form a seven-membered ring structure with a doughnut shape.

The protein resides in the cytoplasm. It localises to the nucleus. Component of LSm protein complexes, which are involved in RNA processing and may function in a chaperone-like manner, facilitating the efficient association of RNA processing factors with their substrates. Component of the cytoplasmic LSM1-LSM7 complex, which is thought to be involved in mRNA degradation by activating the decapping step in the 5'-to-3' mRNA decay pathway. Component of the nuclear LSM2-LSM8 complex, which is involved in splicing of nuclear mRNAs. LSM2-LSM8 associates with multiple snRNP complexes containing the U6 snRNA (U4/U6 di-snRNP, spliceosomal U4/U6.U5 tri-snRNP, and free U6 snRNP). It binds directly to the 3'-terminal U-tract of U6 snRNA and plays a role in the biogenesis and stability of the U6 snRNP and U4/U6 snRNP complexes. LSM2-LSM8 probably also is involved degradation of nuclear pre-mRNA by targeting them for decapping, and in processing of pre-tRNAs, pre-rRNAs and U3 snoRNA. The sequence is that of U6 snRNA-associated Sm-like protein LSm6 (snr-6) from Neurospora crassa (strain ATCC 24698 / 74-OR23-1A / CBS 708.71 / DSM 1257 / FGSC 987).